The sequence spans 105 residues: Serine protease inhibitor Kazal-type 6 (105 aa).

An N-terminal signal peptide occupies residues 1–23 (MKVAGVFLLLSLALLCFFSGAFS). Pyrrolidone carboxylic acid is present on glutamine 24. The Kazal-like domain occupies 49–105 (RLFQINCGEFRDPKVFCTRESDPLCGSDGQTYGNKCAFCKALEKSSGKINLKHRGKC). 3 disulfides stabilise this stretch: cysteine 55/cysteine 87, cysteine 65/cysteine 84, and cysteine 73/cysteine 105.

As to expression, expressed in the upper epidermis and in skin appendages.

Its subcellular location is the secreted. In terms of biological role, serine protease inhibitor selective for kallikreins. Efficiently inhibits KLK5 and human KLK2, KLK4, KLK5, KLK6, KLK7, KLK12, KLK13 and KLK14. Doesn't inhibit human KLK1 and KLK8. This chain is Serine protease inhibitor Kazal-type 6 (Spink6), found in Mus musculus (Mouse).